We begin with the raw amino-acid sequence, 471 residues long: 3-isopropylmalate dehydratase large subunit (471 aa).

[4Fe-4S] cluster contacts are provided by Cys-347, Cys-409, and Cys-412.

This sequence belongs to the aconitase/IPM isomerase family. LeuC type 1 subfamily. Heterodimer of LeuC and LeuD. The cofactor is [4Fe-4S] cluster.

It catalyses the reaction (2R,3S)-3-isopropylmalate = (2S)-2-isopropylmalate. It functions in the pathway amino-acid biosynthesis; L-leucine biosynthesis; L-leucine from 3-methyl-2-oxobutanoate: step 2/4. Functionally, catalyzes the isomerization between 2-isopropylmalate and 3-isopropylmalate, via the formation of 2-isopropylmaleate. The protein is 3-isopropylmalate dehydratase large subunit of Buchnera aphidicola subsp. Rhopalosiphum padi.